The primary structure comprises 68 residues: DNA-directed RNA polymerase subunit omega (68 aa).

Belongs to the RNA polymerase subunit omega family. In terms of assembly, the RNAP catalytic core consists of 2 alpha, 1 beta, 1 beta' and 1 omega subunit. When a sigma factor is associated with the core the holoenzyme is formed, which can initiate transcription.

It carries out the reaction RNA(n) + a ribonucleoside 5'-triphosphate = RNA(n+1) + diphosphate. In terms of biological role, promotes RNA polymerase assembly. Latches the N- and C-terminal regions of the beta' subunit thereby facilitating its interaction with the beta and alpha subunits. This Syntrophotalea carbinolica (strain DSM 2380 / NBRC 103641 / GraBd1) (Pelobacter carbinolicus) protein is DNA-directed RNA polymerase subunit omega.